The primary structure comprises 146 residues: Large ribosomal subunit protein uL15 (146 aa).

The disordered stretch occupies residues 1-55 (MGLRLNELSPGVGAKKTAQRRGRGIGSGLGKTGGRGVKGQKSRSGSSIRSGFEGG). The span at 24–37 (GIGSGLGKTGGRGV) shows a compositional bias: gly residues.

This sequence belongs to the universal ribosomal protein uL15 family. Part of the 50S ribosomal subunit.

Its function is as follows. Binds to the 23S rRNA. The sequence is that of Large ribosomal subunit protein uL15 from Psychrobacter cryohalolentis (strain ATCC BAA-1226 / DSM 17306 / VKM B-2378 / K5).